The sequence spans 212 residues: HTH-type transcriptional regulator RutR (212 aa).

Residues 17 to 77 (SAKKKAILSA…AVLRQILDIW (61 aa)) enclose the HTH tetR-type domain. Residues 39 to 58 (TRLEQIAELAGVSKTNLLYY) constitute a DNA-binding region (H-T-H motif).

In terms of assembly, homodimer.

In terms of biological role, master transcription regulator which represses the degradation of pyrimidines (rutABCDEFG) and purines (gcl operon) for maintenance of metabolic balance between pyrimidines and purines. It also regulates the synthesis of pyrimidine nucleotides and arginine from glutamine (carAB) and the supply of glutamate (gadABWX). This chain is HTH-type transcriptional regulator RutR (rutR), found in Escherichia coli O157:H7.